A 178-amino-acid chain; its full sequence is ATP synthase subunit delta (178 aa).

It belongs to the ATPase delta chain family. F-type ATPases have 2 components, F(1) - the catalytic core - and F(0) - the membrane proton channel. F(1) has five subunits: alpha(3), beta(3), gamma(1), delta(1), epsilon(1). F(0) has three main subunits: a(1), b(2) and c(10-14). The alpha and beta chains form an alternating ring which encloses part of the gamma chain. F(1) is attached to F(0) by a central stalk formed by the gamma and epsilon chains, while a peripheral stalk is formed by the delta and b chains.

The protein localises to the cell inner membrane. F(1)F(0) ATP synthase produces ATP from ADP in the presence of a proton or sodium gradient. F-type ATPases consist of two structural domains, F(1) containing the extramembraneous catalytic core and F(0) containing the membrane proton channel, linked together by a central stalk and a peripheral stalk. During catalysis, ATP synthesis in the catalytic domain of F(1) is coupled via a rotary mechanism of the central stalk subunits to proton translocation. In terms of biological role, this protein is part of the stalk that links CF(0) to CF(1). It either transmits conformational changes from CF(0) to CF(1) or is implicated in proton conduction. In Acinetobacter baylyi (strain ATCC 33305 / BD413 / ADP1), this protein is ATP synthase subunit delta.